The following is a 199-amino-acid chain: Probable GTP-binding protein EngB (199 aa).

The EngB-type G domain maps to 28–199 (DLPEIALAGR…DSWDAILEQV (172 aa)). Residues 36-43 (GRSNVGKS), 63-67 (GKTQL), 81-84 (DVPG), 148-151 (TKAD), and 180-182 (FSS) contribute to the GTP site. 2 residues coordinate Mg(2+): Ser-43 and Thr-65.

Belongs to the TRAFAC class TrmE-Era-EngA-EngB-Septin-like GTPase superfamily. EngB GTPase family. Mg(2+) is required as a cofactor.

Necessary for normal cell division and for the maintenance of normal septation. In Streptococcus pyogenes serotype M28 (strain MGAS6180), this protein is Probable GTP-binding protein EngB.